The sequence spans 438 residues: UDP-N-acetylmuramoylalanine--D-glutamate ligase (438 aa).

112–118 contributes to the ATP binding site; the sequence is GSNGKST.

It belongs to the MurCDEF family.

Its subcellular location is the cytoplasm. The enzyme catalyses UDP-N-acetyl-alpha-D-muramoyl-L-alanine + D-glutamate + ATP = UDP-N-acetyl-alpha-D-muramoyl-L-alanyl-D-glutamate + ADP + phosphate + H(+). It functions in the pathway cell wall biogenesis; peptidoglycan biosynthesis. Functionally, cell wall formation. Catalyzes the addition of glutamate to the nucleotide precursor UDP-N-acetylmuramoyl-L-alanine (UMA). This chain is UDP-N-acetylmuramoylalanine--D-glutamate ligase, found in Shigella boydii serotype 4 (strain Sb227).